The sequence spans 467 residues: MLYSENDKRKHESYRIPLFGSEEESTSIPKYVLKKEPMEPRIAYQLVKDQLMDEGNARQNLATFCQTYMEKEAEILMAETLEKNAIDKSEYPQTAELENRCVNILADLWNAPKEMSYLGTSTVGSSEACMLGGLAMKFRWRNNAEKRGLDIQAKRPNLIISSGYQVCWEKFCVYWDVDMRVVPMDKEHLSLDVEKVFELVDEYTIGIVGILGITYTGKFDDIALLDEKVEAYNEANEHQLVIHIDGASGAMFTPFVNPELPWDFRLKNVVSINTSGHKYGLVYPGVGWILWKDKEYLPKELIFEVSYLGGSMPTMAINFSRSASQIIGQYYNFLRYGFEGYREIHEKTKKTALYLSKTVEKSGYFEIINDGSNLPIVCYKLKDDLDVEWTLYDLADQLLMKGWQVPAYPLPADLSDTIIQRFVCRADLGYNVAEEFAADFADALHNLEHARVLYHDKERNDSYGFTH.

An N6-(pyridoxal phosphate)lysine modification is found at lysine 278.

This sequence belongs to the group II decarboxylase family. Pyridoxal 5'-phosphate serves as cofactor.

It catalyses the reaction L-glutamate + H(+) = 4-aminobutanoate + CO2. The polypeptide is Probable glutamate decarboxylase gamma (Listeria innocua serovar 6a (strain ATCC BAA-680 / CLIP 11262)).